A 229-amino-acid polypeptide reads, in one-letter code: 2-C-methyl-D-erythritol 4-phosphate cytidylyltransferase (229 aa).

Belongs to the IspD/TarI cytidylyltransferase family. IspD subfamily.

The enzyme catalyses 2-C-methyl-D-erythritol 4-phosphate + CTP + H(+) = 4-CDP-2-C-methyl-D-erythritol + diphosphate. It functions in the pathway isoprenoid biosynthesis; isopentenyl diphosphate biosynthesis via DXP pathway; isopentenyl diphosphate from 1-deoxy-D-xylulose 5-phosphate: step 2/6. In terms of biological role, catalyzes the formation of 4-diphosphocytidyl-2-C-methyl-D-erythritol from CTP and 2-C-methyl-D-erythritol 4-phosphate (MEP). The polypeptide is 2-C-methyl-D-erythritol 4-phosphate cytidylyltransferase (Clostridium botulinum (strain Langeland / NCTC 10281 / Type F)).